Consider the following 628-residue polypeptide: MSSYSPLVPPAAGFDADGRFRSVAYGDVYHSLSGALGQAEHVFLRGNGLPQRWRGRQAFTVCETGFGLGLNFLALWDAWRNDPARPRCLHMVSIEAHPFARDALRDWLRQLAPDILQGLAGQLADQWPACLPGLHRLEFEGGAVTLTLAFGAASALAPHLRARVDAYFLDGFAPDRNPELWQPALMRDLARMAAPDATLATWACAGSVRQALRDAGFRVRKQPGYGGKWHMTVGVRESAQPEAPADAWALARAADGEGQDEVVVVGGGLAGAGIAQALALRGRPVCVIDAAGPASAHAGHVAAALTPVIARDDNPRARLSRAGSQRALARWAGLRPGAAPRRCGTLQLERDAGRSAALAETLQQLQFPADWVRAVDRDEAAGLAGVPLARGGVFFADGLLVQPAALIPALLGMPGVRRVAGCAAVLRRVAHGWQVLDDAGQLLGQGATVVLANAFGAQALLRDSGLLDPLPRVAQMHALAGEITLLPGQGLGGGPRCIVGGEGYLLPPVDGWCVAGSTYEHGAATARVGPAGQQTNLGKAAGLLGGLPAAWAALAPGQLPGWAGWRAVLPGRLPAVGPLGHAPGVWLAAGYASRGLSWSALAGDLIAACLHGEPLPLPADLLAAVAPR.

The interval Met1–Glu237 is tRNA (mnm(5)s(2)U34)-methyltransferase. The segment at Val265–Arg628 is FAD-dependent cmnm(5)s(2)U34 oxidoreductase.

This sequence in the N-terminal section; belongs to the methyltransferase superfamily. tRNA (mnm(5)s(2)U34)-methyltransferase family. In the C-terminal section; belongs to the DAO family. FAD is required as a cofactor.

The protein localises to the cytoplasm. The catalysed reaction is 5-aminomethyl-2-thiouridine(34) in tRNA + S-adenosyl-L-methionine = 5-methylaminomethyl-2-thiouridine(34) in tRNA + S-adenosyl-L-homocysteine + H(+). Catalyzes the last two steps in the biosynthesis of 5-methylaminomethyl-2-thiouridine (mnm(5)s(2)U) at the wobble position (U34) in tRNA. Catalyzes the FAD-dependent demodification of cmnm(5)s(2)U34 to nm(5)s(2)U34, followed by the transfer of a methyl group from S-adenosyl-L-methionine to nm(5)s(2)U34, to form mnm(5)s(2)U34. This Bordetella petrii (strain ATCC BAA-461 / DSM 12804 / CCUG 43448) protein is tRNA 5-methylaminomethyl-2-thiouridine biosynthesis bifunctional protein MnmC.